Here is a 188-residue protein sequence, read N- to C-terminus: Glutamyl endopeptidase 2 (188 aa).

Residues cysteine 14 and cysteine 34 are joined by a disulfide bond. Catalysis depends on charge relay system residues histidine 33, aspartate 62, and serine 143. An intrachain disulfide couples cysteine 137 to cysteine 163.

The protein belongs to the peptidase S1 family. As to quaternary structure, monomer.

It catalyses the reaction Preferential cleavage: -Glu-|-Xaa- &gt;&gt; -Asp-|-Xaa-. Preference for Pro or Leu at P2 and Phe at P3. Cleavage of -Glu-|-Asp- and -Glu-|-Pro- bonds is slow.. Preferentially cleaves peptide bonds on the carboxyl-terminal side of glutamate. The polypeptide is Glutamyl endopeptidase 2 (sprE) (Streptomyces griseus).